The sequence spans 1426 residues: ABC transporter G family member 31 (1426 aa).

Residues N6 and N150 are each glycosylated (N-linked (GlcNAc...) asparagine). The ABC transporter 1 domain occupies 160–434; the sequence is LSSLRIIKPR…FESLGFRLPP (275 aa). Position 193–200 (193–200) interacts with ATP; it reads GPPGSGKS. The N-linked (GlcNAc...) asparagine glycan is linked to N219. T276 carries the phosphothreonine modification. The 214-residue stretch at 512–725 folds into the ABC transmembrane type-2 1 domain; sequence ENLKVCFVRE…GQRAIAVNEF (214 aa). 6 consecutive transmembrane segments (helical) span residues 530–550, 569–589, 618–638, 649–669, 675–695, and 760–780; these read FLYT…ATVF, CLFF…PLMI, VPYS…TVGL, MLLL…MASL, IANT…GFVI, and IGIA…TLAL. In terms of domain architecture, ABC transporter 2 spans 826-1078; it reads MTFHNVNYYV…VLVDYFQGIN (253 aa). N856 is a glycosylation site (N-linked (GlcNAc...) asparagine). Residue 871-878 participates in ATP binding; sequence GSSGAGKT. The ABC transmembrane type-2 2 domain maps to 1151–1365; it reads SQFLLCLWKQ…TLQGVILSQL (215 aa). The next 7 helical transmembrane spans lie at 1172–1192, 1202–1222, 1258–1278, 1285–1305, 1315–1335, 1342–1362, and 1396–1416; these read LVRL…FWDI, LITV…SNAS, IPYI…TIGF, FVLY…YGMM, LAAV…GFLV, VWWI…GVIL, and IGVS…AFAL.

Belongs to the ABC transporter superfamily. ABCG family. PDR (TC 3.A.1.205) subfamily. In terms of tissue distribution, expressed in seedlings, stems, leaves, siliques and inflorescence. In seeds, confined to the endosperm. Highly expressed in the tapetum of anthers.

It localises to the cell membrane. It carries out the reaction abscisate(in) + ATP + H2O = abscisate(out) + ADP + phosphate + H(+). Functionally, together with ABCG25, export abscisic acid (ABA) from the endosperm to deliver it to the embryo via ABCG30 and ABCG40-mediated import to suppress radicle extension and subsequent embryonic growth. Together with ABCG9, involved in pollen coat deposition of steryl glycosides required for pollen fitness. May be a general defense protein. In Arabidopsis thaliana (Mouse-ear cress), this protein is ABC transporter G family member 31.